A 317-amino-acid chain; its full sequence is tRNA dimethylallyltransferase (317 aa).

An ATP-binding site is contributed by 16–23; sequence GPTASGKS. 18–23 lines the substrate pocket; sequence TASGKS. 3 interaction with substrate tRNA regions span residues 41–44, 165–169, and 247–252; these read DSAQ, QRIQR, and RCVGYR.

It belongs to the IPP transferase family. Monomer. Requires Mg(2+) as cofactor.

It catalyses the reaction adenosine(37) in tRNA + dimethylallyl diphosphate = N(6)-dimethylallyladenosine(37) in tRNA + diphosphate. Functionally, catalyzes the transfer of a dimethylallyl group onto the adenine at position 37 in tRNAs that read codons beginning with uridine, leading to the formation of N6-(dimethylallyl)adenosine (i(6)A). This Nitrosomonas eutropha (strain DSM 101675 / C91 / Nm57) protein is tRNA dimethylallyltransferase.